A 267-amino-acid chain; its full sequence is Actin maturation protease (267 aa).

Residues 1 to 32 form a disordered region; that stretch reads MSNISSVAPPPPPPPMIVTPSTPATTKERPVG. Positions 8 to 17 are enriched in pro residues; that stretch reads APPPPPPPMI. Positions 74 to 188 are peptidase C39-like; that stretch reads SIVQVGPTCG…WALIVGYLVD (115 aa). Cys-82 is an active-site residue.

It belongs to the ACTMAP family.

It carries out the reaction N-terminal N(alpha)-acetyl-L-cysteinyl-L-aspartyl-[protein] + H2O = N-terminal L-aspartyl-[protein] + N-acetyl-L-cysteine. In terms of biological role, actin maturation protease that specifically mediates the cleavage of immature acetylated N-terminal actin, thereby contributing to actin maturation. The polypeptide is Actin maturation protease (Drosophila melanogaster (Fruit fly)).